The chain runs to 100 residues: Large ribosomal subunit protein uL23 (100 aa).

The protein belongs to the universal ribosomal protein uL23 family. In terms of assembly, part of the 50S ribosomal subunit. Contacts protein L29, and trigger factor when it is bound to the ribosome.

In terms of biological role, one of the early assembly proteins it binds 23S rRNA. One of the proteins that surrounds the polypeptide exit tunnel on the outside of the ribosome. Forms the main docking site for trigger factor binding to the ribosome. The polypeptide is Large ribosomal subunit protein uL23 (Baumannia cicadellinicola subsp. Homalodisca coagulata).